Consider the following 694-residue polypeptide: MAEKTKEETQLWNGTVLQDASSLQDSVFSSESDNSLYFTYSGQSNTLEVRDLTYQGGTCLRSWGQEDPHMSLGLSESVDMASQVPWFEQLAQFKLPWRSRGSQDSWDLGIRNLSFKVRSGQMLAIIGSAGCGRATLLDVITGRDHGGKMKSGQIWINGQPSTPQLIQKCVAHVRQQDQLLPNLTVRETLTFIAQMRLPKTFSQAQRDKRVEDVIAELRLRQCANTRVGNTYVRGVSGGERRRVSIGVQLLWNPGILILDEPTSGLDSFTAHNLVRTLSRLAKGNRLVLISLHQPRSDIFRLFDLVLLMTSGTPIYLGVAQHMVQYFTSIGYPCPRYSNPADFYVDLTSIDRRSKEQEVATMEKARLLAALFLEKVQGFDDFLWKAEAKSLDTGTYAVSQTLTQDTNCGTAAELPGMIQQFTTLIRRQISNDFRDLPTLFIHGAEACLMSLIIGFLYYGHADKPLSFMDMAALLFMIGALIPFNVILDVVSKCHSERSLLYYELEDGLYTAGPYFFAKVLGELPEHCAYVIIYGMPIYWLTNLRPGPELFLLHFMLLWLVVFCCRTMALAASAMLPTFHMSSFCCNALYNSFYLTAGFMINLNNLWIVPAWISKMSFLRWCFSGLMQIQFNGHIYTTQIGNLTFSVPGDAMVTAMDLNSHPLYAIYLIVIGISCGFLSLYYLSLKFIKQKSIQDW.

Over Met1–Thr437 the chain is Cytoplasmic. Positions Ala91 to Arg335 constitute an ABC transporter domain. Positions Pro436–Lys684 constitute an ABC transmembrane type-2 domain. The chain crosses the membrane as a helical span at residues Leu438–Gly458. Residues His459–Asp468 are Extracellular-facing. The helical transmembrane segment at Met469–Val489 threads the bilayer. The Cytoplasmic portion of the chain corresponds to Ser490–Val518. Residues Leu519–Leu539 traverse the membrane as a helical segment. Residues Thr540–Leu548 are Extracellular-facing. A helical membrane pass occupies residues Phe549–Ala569. Topologically, residues Ala570–Thr576 are cytoplasmic. Residues Phe577–Phe597 form a helical membrane-spanning segment. Residues Met598 to Pro660 lie on the Extracellular side of the membrane. Asn640 carries an N-linked (GlcNAc...) asparagine glycan. The helical transmembrane segment at Leu661 to Leu681 threads the bilayer. Residues Ser682–Trp694 lie on the Cytoplasmic side of the membrane.

The protein belongs to the ABC transporter superfamily. ABCG family. Eye pigment precursor importer (TC 3.A.1.204) subfamily. Heterodimer with ABCG8. Mg(2+) serves as cofactor. N-glycosylated. N-glycosylation is important for efficient export out of the endoplasmic reticulum. As to expression, highest expression in liver, with lower levels in small intestine and colon.

It is found in the cell membrane. It localises to the apical cell membrane. The enzyme catalyses cholesterol(in) + ATP + H2O = cholesterol(out) + ADP + phosphate + H(+). It catalyses the reaction sitosterol(in) + ATP + H2O = sitosterol(out) + ADP + phosphate + H(+). Functionally, ABCG5 and ABCG8 form an obligate heterodimer that mediates Mg(2+)- and ATP-dependent sterol transport across the cell membrane. Plays an essential role in the selective transport of the dietary cholesterol in and out of the enterocytes and in the selective sterol excretion by the liver into bile. Required for normal sterol homeostasis. The heterodimer with ABCG5 has ATPase activity. The protein is ATP-binding cassette sub-family G member 8 of Rattus norvegicus (Rat).